The primary structure comprises 311 residues: Malate dehydrogenase (311 aa).

Residues 7 to 13 (GAAGGIG) and D34 contribute to the NAD(+) site. Substrate-binding residues include R81 and R87. NAD(+) is bound by residues N94 and 117–119 (ITN). 2 residues coordinate substrate: N119 and R153. Residue H177 is the Proton acceptor of the active site. NAD(+) is bound at residue M227.

This sequence belongs to the LDH/MDH superfamily. MDH type 1 family. In terms of assembly, homodimer.

It catalyses the reaction (S)-malate + NAD(+) = oxaloacetate + NADH + H(+). Functionally, catalyzes the reversible oxidation of malate to oxaloacetate. The sequence is that of Malate dehydrogenase from Shewanella baltica (strain OS155 / ATCC BAA-1091).